Consider the following 461-residue polypeptide: Cysteine--tRNA ligase (461 aa).

C28 contacts Zn(2+). A 'HIGH' region motif is present at residues 30 to 40 (MTVYDYCHLGH). C212, H237, and E241 together coordinate Zn(2+). Positions 269–273 (KMSKS) match the 'KMSKS' region motif. K272 lines the ATP pocket.

It belongs to the class-I aminoacyl-tRNA synthetase family. In terms of assembly, monomer. The cofactor is Zn(2+).

It is found in the cytoplasm. It carries out the reaction tRNA(Cys) + L-cysteine + ATP = L-cysteinyl-tRNA(Cys) + AMP + diphosphate. The protein is Cysteine--tRNA ligase of Aromatoleum aromaticum (strain DSM 19018 / LMG 30748 / EbN1) (Azoarcus sp. (strain EbN1)).